A 51-amino-acid polypeptide reads, in one-letter code: Large ribosomal subunit protein eL39 (51 aa).

The protein belongs to the eukaryotic ribosomal protein eL39 family.

The sequence is that of Large ribosomal subunit protein eL39 from Picrophilus torridus (strain ATCC 700027 / DSM 9790 / JCM 10055 / NBRC 100828 / KAW 2/3).